Consider the following 555-residue polypeptide: Solute carrier family 22 member 2 (555 aa).

Residues 1–22 lie on the Cytoplasmic side of the membrane; sequence MPTTVDDVLEHGGEFHFFQKQM. A helical transmembrane segment spans residues 23–43; the sequence is FFLLALLSATFAPIYVGIVFL. Topologically, residues 44–150 are extracellular; it reads GFTPDHRCRS…LVCANSWMLD (107 aa). Asn72 is a glycosylation site (N-linked (GlcNAc...) asparagine). The chain crosses the membrane as a helical span at residues 151-171; that stretch reads LFQSSVNVGFFIGSMSIGYIA. The Cytoplasmic portion of the chain corresponds to 172–177; it reads DRFGRK. A helical transmembrane segment spans residues 178–198; sequence LCLLTTVLINAAAGVLMAISP. Topologically, residues 199–208 are extracellular; that stretch reads TYTWMLIFRL. A helical transmembrane segment spans residues 209–229; it reads IQGLVSKAGWLIGYILITEFV. Over 230 to 238 the chain is Cytoplasmic; the sequence is GRRYRRTVG. A helical membrane pass occupies residues 239-259; sequence IFYQVAYTVGLLVLAGVAYAL. The Extracellular portion of the chain corresponds to 260-263; that stretch reads PHWR. A helical transmembrane segment spans residues 264–284; sequence WLQFTVSLPNFFFLLYYWCIP. Residues 284-288 carry the Proline-rich sequence motif; that stretch reads PESPR. Topologically, residues 285 to 348 are cytoplasmic; it reads ESPRWLISQN…VRTPQIRKHT (64 aa). The chain crosses the membrane as a helical span at residues 349–369; sequence MILMYNWFTSSVLYQGLIMHM. Residues 370 to 375 are Extracellular-facing; sequence GLAGDN. A helical membrane pass occupies residues 376–396; that stretch reads IYLDFFYSALVEFPAAFMIIL. The Cytoplasmic segment spans residues 397 to 414; it reads TIDRIGRRYPWAASNMVA. The chain crosses the membrane as a helical span at residues 415 to 435; that stretch reads GAACLASVFIPGDLQWLKIII. Topologically, residues 436–441 are extracellular; that stretch reads SCLGRM. Residues 442-462 form a helical membrane-spanning segment; the sequence is GITMAYEIVCLVNAELYPTFI. Topologically, residues 463–464 are cytoplasmic; the sequence is RN. The helical transmembrane segment at 465–485 threads the bilayer; that stretch reads LGVHICSSMCDIGGIITPFLV. The Extracellular portion of the chain corresponds to 486–494; sequence YRLTNIWLE. Residues 495 to 515 traverse the membrane as a helical segment; it reads LPLMVFGVLGLVAGGLVLLLP. Topologically, residues 516–555 are cytoplasmic; sequence ETKGKALPETIEEAENMQRPRKNKEKMIYLQVQKLDIPLN.

Belongs to the major facilitator (TC 2.A.1) superfamily. Organic cation transporter (TC 2.A.1.19) family. Tyrosine phosphorylated by tyrosine-protein kinase YES1. In terms of tissue distribution, mainly expressed in kidney, in the cortex and medulla. Localized in testis, mostly to peritubular myoid cells and Leydig cells and also detected along the basal membrane of Sertoli cells. Expressed in brain, in neurons of the cerebral cortex and in various subcortical nuclei. In the brain, also detected in the dopaminergic regions of the substantia nigra. Expressed in tracheal and bronchial ciliated epithelium in the respiratory tract. Also detected in secretory phase endometrium, in scattered stromal cells. Expressed in spleen, placenta, small intestine and spinal cord. Weakly expressed in prostate, uterus and lung. Mainly expressed in kidney, bone marrow and testis. Expressed in colon, skeletal muscle, spinal cord, placenta and liver.

Its subcellular location is the basolateral cell membrane. It is found in the basal cell membrane. The protein localises to the apical cell membrane. The catalysed reaction is (R)-noradrenaline(out) = (R)-noradrenaline(in). The enzyme catalyses (R)-adrenaline(out) = (R)-adrenaline(in). It catalyses the reaction serotonin(out) = serotonin(in). It carries out the reaction dopamine(out) = dopamine(in). The catalysed reaction is histamine(out) = histamine(in). The enzyme catalyses thiamine(in) = thiamine(out). It catalyses the reaction creatinine(in) = creatinine(out). It carries out the reaction 1-methylnicotinamide(out) = 1-methylnicotinamide(in). The catalysed reaction is guanidine(out) = guanidine(in). The enzyme catalyses choline(out) = choline(in). It catalyses the reaction agmatine(out) = agmatine(in). It carries out the reaction putrescine(out) = putrescine(in). The catalysed reaction is spermidine(in) = spermidine(out). The enzyme catalyses tyramine(in) = tyramine(out). It catalyses the reaction L-histidyl-L-proline diketopiperazine(in) = L-histidyl-L-proline diketopiperazine(out). It carries out the reaction (R)-salsolinol(in) = (R)-salsolinol(out). The catalysed reaction is N-methyl-(R)-salsolinol(in) = N-methyl-(R)-salsolinol(out). The enzyme catalyses acetylcholine(in) = acetylcholine(out). It catalyses the reaction prostaglandin F2alpha(out) = prostaglandin F2alpha(in). It carries out the reaction prostaglandin E2(out) = prostaglandin E2(in). With respect to regulation, tyrosine phosphorylation of the transporter leads to activation of the transport activity. TEA uptake is activated by tyrosine phosphorylation. Inhibited by cGMP, most likely through a cGMP-binding protein that interacts with OCT2. In terms of biological role, electrogenic voltage-dependent transporter that mediates the transport of a variety of organic cations such as endogenous bioactive amines, cationic drugs and xenobiotics. Functions as a Na(+)-independent, bidirectional uniporter. Cation cellular uptake or release is driven by the electrochemical potential, i.e. membrane potential and concentration gradient. However, may also engage electroneutral cation exchange when saturating concentrations of cation substrates are reached. Predominantly expressed at the basolateral membrane of hepatocytes and proximal tubules and involved in the uptake and disposition of cationic compounds by hepatic and renal clearance from the blood flow. Implicated in monoamine neurotransmitters uptake such as histamine, dopamine, adrenaline/epinephrine, noradrenaline/norepinephrine, serotonin and tyramine, thereby supporting a physiological role in the central nervous system by regulating interstitial concentrations of neurotransmitters. Also capable of transporting dopaminergic neuromodulators cyclo(his-pro), salsolinol and N-methyl-salsolinol, thereby involved in the maintenance of dopaminergic cell integrity in the central nervous system. Mediates the bidirectional transport of acetylcholine (ACh) at the apical membrane of ciliated cell in airway epithelium, thereby playing a role in luminal release of ACh from bronchial epithelium. Also transports guanidine and endogenous monoamines such as vitamin B1/thiamine, creatinine and N-1-methylnicotinamide (NMN). Mediates the uptake and efflux of quaternary ammonium compound choline. Mediates the bidirectional transport of polyamine agmatine and the uptake of polyamines putrescine and spermidine. Able to transport non-amine endogenous compounds such as prostaglandin E2 (PGE2) and prostaglandin F2-alpha (PGF2-alpha). Also involved in the uptake of xenobiotic 4-(4-(dimethylamino)styryl)-N-methylpyridinium (ASP). May contribute to regulate the transport of organic compounds in testis across the blood-testis-barrier. Its function is as follows. In contrast with isoform 1, not able to transport guanidine, creatinine, cimetidine and metformin. This is Solute carrier family 22 member 2 from Homo sapiens (Human).